A 233-amino-acid polypeptide reads, in one-letter code: MKAICVLSGGLDSAVTSMFAKSKNYDISTVTFNYGQMALNQEIKSAKKISDILNADHHVIDINFVKEFSKSGLNTGNIPEPENEDLDDFEKSEKTMKAVWVPARNMIMFSIASGFAEGIGAEKIFSGLNKEEGVTFPDNTPEFIERFNKSLEYGTLNKVKMVAPLYELNKPEIAKLGKELELKLDLEVLKYSYSCYKDNGKDYLHCGTCESCMRRKRAFKEAGITDPTKYLVE.

7–17 (LSGGLDSAVTS) is a binding site for ATP. The Zn(2+) site is built by cysteine 195, cysteine 206, cysteine 209, and cysteine 212.

This sequence belongs to the QueC family. The cofactor is Zn(2+).

It carries out the reaction 7-carboxy-7-deazaguanine + NH4(+) + ATP = 7-cyano-7-deazaguanine + ADP + phosphate + H2O + H(+). Its pathway is purine metabolism; 7-cyano-7-deazaguanine biosynthesis. Functionally, catalyzes the ATP-dependent conversion of 7-carboxy-7-deazaguanine (CDG) to 7-cyano-7-deazaguanine (preQ(0)). In Methanococcus maripaludis (strain DSM 14266 / JCM 13030 / NBRC 101832 / S2 / LL), this protein is 7-cyano-7-deazaguanine synthase.